A 110-amino-acid chain; its full sequence is Iron-sulfur cluster assembly protein CyaY (110 aa).

The protein belongs to the frataxin family.

Functionally, involved in iron-sulfur (Fe-S) cluster assembly. May act as a regulator of Fe-S biogenesis. This Ectopseudomonas mendocina (strain ymp) (Pseudomonas mendocina) protein is Iron-sulfur cluster assembly protein CyaY.